The sequence spans 357 residues: Protein BMRF2 (357 aa).

Residues 1–11 are Virion surface-facing; it reads MFSCKQHLSLG. Over 12 to 32 the chain traverses the membrane; sequence ACVFCLGLLASTPFIWCFVFA. Residues 33–46 lie on the Virion surface side of the membrane; it reads NLLSLEIFSPWQTH. The chain crosses the lipid bilayer at residues 47–67; the sequence is VYRLGFPTACLMAVLWTLVPA. The Virion surface segment spans residues 68-70; the sequence is KHA. Residues 71 to 91 are membrane-embedded; that stretch reads VRAVTPAIMLNIASALIFFSL. Residues 92 to 98 are Virion surface-facing; that stretch reads RVYSTST. A transmembrane helix spans residues 99–121; it reads WVSAPCLFLANLPLLCLWPRLAI. Topologically, residues 122-133 are virion surface; it reads EIVYICPAIHQR. Residues 134–154 are membrane-embedded; that stretch reads FFELGLLLACTIFALSVVSRA. Residues 155–158 are Virion surface-facing; that stretch reads LEVS. A transmembrane span lies at residues 159 to 179; that stretch reads AVFMSPFFIFLALGSGSLAGA. Residues 180–217 lie on the Virion surface side of the membrane; it reads RRNQIYTSGLERRRSIFCARGDHSVASLKETLHKCPWD. Residues 199–201 carry the Integrin binding site motif; that stretch reads RGD. Positions 218–238 form a transmembrane segment; that stretch reads LLAISALTVLVVCVMIVLHVH. At 239 to 240 the chain is on the virion surface side; sequence AE. The chain crosses the lipid bilayer at residues 241–261; that stretch reads VFFGLSRYLPLFLCGAMASGG. The Virion surface segment spans residues 262-267; the sequence is LYLGHS. Residues 268-288 are membrane-embedded; the sequence is SIIACVMATLCTLTSVVVYFL. The Virion surface segment spans residues 289 to 298; the sequence is HETLGPLGKT. The chain crosses the lipid bilayer at residues 299 to 319; sequence VLFISIFVYYFSGVAALSAAM. The Virion surface portion of the chain corresponds to 320–335; it reads RYKLKKFVNGPLVHLR. The chain crosses the lipid bilayer at residues 336–356; sequence VVYMCCFVFTFCEYLLVTFIK. Ser-357 is a topological domain (virion surface).

It belongs to the herpesviridae BMRF2 family. As to quaternary structure, interacts with BDLF2. Interacts with host beta1 integrin family. In terms of processing, extensively glycosylated by O-linked oligosaccharides.

It localises to the virion membrane. The protein localises to the host cell membrane. Its function is as follows. Facilitates virus attachment to oral epithelial cells by binding to host beta1 integrin family. Participates in rearrangement of cellular actin to increase intercellular contacts by binding BDLF2 and thereby promote virus cell-to-cell spreading. The protein is Protein BMRF2 of Homo sapiens (Human).